Reading from the N-terminus, the 290-residue chain is Cilia- and flagella-associated protein 298-A (290 aa).

Belongs to the CFAP298 family.

It is found in the cytoplasm. It localises to the cytoskeleton. Its subcellular location is the cilium basal body. In terms of biological role, plays a role in motile cilium function, possibly by acting on outer dynein arm assembly. Seems to be important for initiation rather than maintenance of cilium motility. Required for correct positioning of the cilium at the apical cell surface, suggesting an additional role in the planar cell polarity (PCP) pathway. May suppress canonical Wnt signaling activity. This chain is Cilia- and flagella-associated protein 298-A (cfap298-a), found in Xenopus laevis (African clawed frog).